A 368-amino-acid polypeptide reads, in one-letter code: Chorismate synthase (368 aa).

Arg48 and Arg54 together coordinate NADP(+). Residues Arg131–Ser133, Asn243–Ala244, Gly292, Lys307–Ser311, and Arg333 each bind FMN.

Belongs to the chorismate synthase family. Homotetramer. The cofactor is FMNH2.

The enzyme catalyses 5-O-(1-carboxyvinyl)-3-phosphoshikimate = chorismate + phosphate. Its pathway is metabolic intermediate biosynthesis; chorismate biosynthesis; chorismate from D-erythrose 4-phosphate and phosphoenolpyruvate: step 7/7. Functionally, catalyzes the anti-1,4-elimination of the C-3 phosphate and the C-6 proR hydrogen from 5-enolpyruvylshikimate-3-phosphate (EPSP) to yield chorismate, which is the branch point compound that serves as the starting substrate for the three terminal pathways of aromatic amino acid biosynthesis. This reaction introduces a second double bond into the aromatic ring system. This is Chorismate synthase from Nitrobacter winogradskyi (strain ATCC 25391 / DSM 10237 / CIP 104748 / NCIMB 11846 / Nb-255).